The chain runs to 914 residues: MASESSPLLAYRLLGEEGAAFPPNGAGVSGVPSSRKLSTFLGVVVPTVLSMFSIVVFLRIGFVVGHAGLLQALAMLLVAYIILALTVLSVCAIATNGAVRGGGAYFMISRTLGPEVGGSIGLMFYLANVCGCAVSLLGLVESILDVFGADATGSSGIQVLPQGYGWNLLYGSLLLGLVGGVCTLGAGLYARASFLTFLLVSGSLASVLVSFVAVGPRNIPLAPRPGTNASSVPHRHGHFTGFNGSTLRDNLGAGYAEDYTTGAMMTFASVFAVLFNGCTGIMAGANMSGELKDPSRAIPLGTIIAVAYTFFIYILLFFLSSFTCDRALLQEDYGFFRDISLWPPLVLIGIYATALSASMSSLIGASRILHALAQDDLFGVILAPAKVVSGGGNPWGAVLYSWGLVQLVLLAGKLNTLAAVVTVFYLVAYAAVDLSCLSLEWASAPNFRPTFSLFSWHTCLLGVASCLLMMFLISPGAAGGSLLLMGLLSALLTARGGPSSWGYVSQALLFHQVRKYLLRLDVRKEHVKFWRPQLLLLVGNPRGALPLLRLANQLKKGGLYVLGHVTLGDLDSLPSDPVQPQYGAWLSLVDLAQVKAFVDLTLSPSVRQGAQHLLRISGLGGMKPNTLVLGFYDDAPPQDHFLTDPAFSEPAEGTREGGSPALSTLFPPPRAPGSPRALSPQDYVATVADALKMNKNVVLARACGALPPERLSRGSSSSAQLHHVDVWPLNLLRPRGGPGYVDVCGLFLLQMATILSMVPAWHSARLRIFLCLGPREAPGAAEGRLRALLSQLRIRAEVQEVVWGEGAETGEPEEEEGDFVNGGRGDEEAEALACSANALVRAQQGRGTVGGPGGPEGRDGEEGPTTALTFLYLPRPPADPARYPRYLALLETLSRDLGPTLLIHGVTPVTCTDL.

Over 1–36 (MASESSPLLAYRLLGEEGAAFPPNGAGVSGVPSSRK) the chain is Cytoplasmic. The residue at position 6 (Ser6) is a Phosphoserine. The chain crosses the membrane as a helical span at residues 37-57 (LSTFLGVVVPTVLSMFSIVVF). Residues 58–72 (LRIGFVVGHAGLLQA) lie on the Extracellular side of the membrane. The helical transmembrane segment at 73–93 (LAMLLVAYIILALTVLSVCAI) threads the bilayer. Topologically, residues 94 to 119 (ATNGAVRGGGAYFMISRTLGPEVGGS) are cytoplasmic. Residues 120–140 (IGLMFYLANVCGCAVSLLGLV) form a helical membrane-spanning segment. The Extracellular segment spans residues 141–167 (ESILDVFGADATGSSGIQVLPQGYGWN). A helical membrane pass occupies residues 168–188 (LLYGSLLLGLVGGVCTLGAGL). The Cytoplasmic segment spans residues 189–193 (YARAS). The chain crosses the membrane as a helical span at residues 194–214 (FLTFLLVSGSLASVLVSFVAV). Over 215-262 (GPRNIPLAPRPGTNASSVPHRHGHFTGFNGSTLRDNLGAGYAEDYTTG) the chain is Extracellular. 2 N-linked (GlcNAc...) asparagine glycosylation sites follow: Asn228 and Asn243. A helical transmembrane segment spans residues 263-283 (AMMTFASVFAVLFNGCTGIMA). At 284-297 (GANMSGELKDPSRA) the chain is on the cytoplasmic side. A helical transmembrane segment spans residues 298–318 (IPLGTIIAVAYTFFIYILLFF). Residues 319-338 (LSSFTCDRALLQEDYGFFRD) lie on the Extracellular side of the membrane. Residues 339 to 359 (ISLWPPLVLIGIYATALSASM) form a helical membrane-spanning segment. The Cytoplasmic segment spans residues 360 to 376 (SSLIGASRILHALAQDD). Residues 377-399 (LFGVILAPAKVVSGGGNPWGAVL) form a helical membrane-spanning segment. Residues 400 to 416 (YSWGLVQLVLLAGKLNT) are Extracellular-facing. The helical transmembrane segment at 417–437 (LAAVVTVFYLVAYAAVDLSCL) threads the bilayer. Residues 438 to 466 (SLEWASAPNFRPTFSLFSWHTCLLGVASC) lie on the Cytoplasmic side of the membrane. A helical transmembrane segment spans residues 467–487 (LLMMFLISPGAAGGSLLLMGL). Topologically, residues 488-740 (LSALLTARGG…LLRPRGGPGY (253 aa)) are extracellular. Positions 645–678 (PAFSEPAEGTREGGSPALSTLFPPPRAPGSPRAL) are disordered. Residues 741–761 (VDVCGLFLLQMATILSMVPAW) traverse the membrane as a helical segment. Residues 762–914 (HSARLRIFLC…GVTPVTCTDL (153 aa)) lie on the Cytoplasmic side of the membrane. The interval 844 to 864 (QGRGTVGGPGGPEGRDGEEGP) is disordered.

It belongs to the SLC12A transporter family. As to quaternary structure, interacts with SLC12A1.

The protein localises to the cell membrane. It localises to the lysosome membrane. Its function is as follows. May be an inhibitor of SLC12A1. Seems to correspond to a subunit of a multimeric transport system and thus, additional subunits may be required for its function. May play a role in lysosomal ion flux and osmoregulation. This is Solute carrier family 12 member 9 (Slc12a9) from Mus musculus (Mouse).